Reading from the N-terminus, the 371-residue chain is Choline kinase B1 (371 aa).

This sequence belongs to the choline/ethanolamine kinase family. The cofactor is Mg(2+).

The enzyme catalyses choline + ATP = phosphocholine + ADP + H(+). The sequence is that of Choline kinase B1 (ckb-1) from Caenorhabditis elegans.